The primary structure comprises 63 residues: Sperm protamine P1 (63 aa).

A disordered region spans residues 1–63 (MARYRRHSRS…RYSRRGRRRY (63 aa)).

This sequence belongs to the protamine P1 family. In terms of tissue distribution, testis.

The protein resides in the nucleus. The protein localises to the chromosome. Protamines substitute for histones in the chromatin of sperm during the haploid phase of spermatogenesis. They compact sperm DNA into a highly condensed, stable and inactive complex. This chain is Sperm protamine P1 (PRM1), found in Sminthopsis bindi (Kakadu dunnart).